A 669-amino-acid chain; its full sequence is Glutaminase kidney isoform, mitochondrial (669 aa).

Residues 1–54 constitute a mitochondrion transit peptide; the sequence is MMRLRGSGMLRDLLLRSPAGVSATLRRAQPLVTLCRRPRGGGRPAAGPAAAARL. The segment at 68–118 is disordered; it reads LARGLSSSPSEILQELGKGSTHPQPGVSPPAAPAAPGPKDGPGETDAFGNS. Positions 93 to 103 are enriched in pro residues; it reads GVSPPAAPAAP. N6-succinyllysine occurs at positions 130 and 164. Residue serine 286 participates in substrate binding. Lysine 311 bears the N6-acetyllysine mark. Positions 315 to 322 are highly mobile activation loop; sequence GLRFNKLF. Substrate-binding residues include asparagine 335, glutamate 381, asparagine 388, tyrosine 414, tyrosine 466, and valine 484. ANK repeat units follow at residues 585–614 and 619–648; these read DSRTALHVAAAEGHVEVVKFLLEACKVNPF and WNNTPMDEALHFGHHDVFKILQEYQVQYTP. Residues 647–669 form a disordered region; it reads TPQGDSDNGKENQTVHKNLDGLL. Position 652 is a phosphoserine (serine 652). The span at 653–669 shows a compositional bias: basic and acidic residues; it reads DNGKENQTVHKNLDGLL.

The protein belongs to the glutaminase family. Homotetramer, dimer of dimers. The tetramers can assemble into rod-like oligomers (in vitro), but the physiological significance of this is not clear. Interacts with RAF1 and MAP2K2. Interacts with ATCAY; the interaction is direct and may control GLS localization, negatively regulating its activity. Post-translationally, synthesized as a 74-kDa cytosolic precursor which is proteolytically processed by the mitochondrial-processing peptidase (MPP) via a 72-kDa intermediate to yield the mature mitochondrial 68- and 65-kDa subunits. In terms of tissue distribution, isoform 1 and isoform 3 are detected in brain cortex. Isoform 3 is highly expressed in astrocytoma, ganglioglioma and ependymoma. Isoform 1 is highly expressed in brain and kidney, but not detected in liver. Isoform 3 is highly expressed in heart and pancreas, detected at lower levels in placenta, lung, pancreas and kidney, but is not detected in liver. Isoform 2 is expressed in cardiac and skeletal muscle.

It is found in the mitochondrion. The protein resides in the cytoplasm. The protein localises to the cytosol. Its subcellular location is the mitochondrion matrix. It catalyses the reaction L-glutamine + H2O = L-glutamate + NH4(+). Its activity is regulated as follows. Isoform 1 and isoform 3 are activated by phosphate. Inhibited by BPTES. BPTES binds between subunits and favors dissociation of the tetramer into dimers. Inhibited by 6-diazo-5-oxo-L-norleucine (DON). Enzyme activity is stimulated by phosphorylation. In terms of biological role, catalyzes the first reaction in the primary pathway for the renal catabolism of glutamine. Plays a role in maintaining acid-base homeostasis. Regulates the levels of the neurotransmitter glutamate, the main excitatory neurotransmitter in the brain. Its function is as follows. Lacks catalytic activity. The protein is Glutaminase kidney isoform, mitochondrial (GLS) of Homo sapiens (Human).